Reading from the N-terminus, the 232-residue chain is Aspartate/glutamate leucyltransferase (232 aa).

The protein belongs to the R-transferase family. Bpt subfamily.

It localises to the cytoplasm. It catalyses the reaction N-terminal L-glutamyl-[protein] + L-leucyl-tRNA(Leu) = N-terminal L-leucyl-L-glutamyl-[protein] + tRNA(Leu) + H(+). The catalysed reaction is N-terminal L-aspartyl-[protein] + L-leucyl-tRNA(Leu) = N-terminal L-leucyl-L-aspartyl-[protein] + tRNA(Leu) + H(+). Functionally, functions in the N-end rule pathway of protein degradation where it conjugates Leu from its aminoacyl-tRNA to the N-termini of proteins containing an N-terminal aspartate or glutamate. This chain is Aspartate/glutamate leucyltransferase, found in Vibrio vulnificus (strain CMCP6).